The sequence spans 358 residues: uncharacterized protein (358 aa).

207 to 214 lines the ATP pocket; the sequence is AAVKDGKT.

This is an uncharacterized protein from Bacillus subtilis (strain 168).